A 1986-amino-acid polypeptide reads, in one-letter code: Protein Shroom3 (1986 aa).

The tract at residues 1–21 (MKTPENLEEPSATPNPSRTPT) is disordered. A PDZ domain is found at 24–109 (FVYLEALLEG…TLRLVVRRDV (86 aa)). Disordered regions lie at residues 152-199 (CSEP…SSTS), 211-239 (RSPD…LLSP), 265-285 (TSSS…RSGS), 342-463 (QGCA…QPLL), and 564-1055 (NEDS…RRIF). Residue Ser-212 is modified to Phosphoserine. Composition is skewed to polar residues over residues 357–376 (PSPS…TDNL) and 415–425 (PQTNSSGSQKT). The segment covering 430–440 (DQLHTVPERSP) has biased composition (basic and acidic residues). Ser-439 and Ser-443 each carry phosphoserine. Over residues 595–607 (ACSNHHSLSSPQA) the composition is skewed to polar residues. Residues 630 to 645 (QEDHNANLRQKVEREG) show a composition bias toward basic and acidic residues. Polar residues predominate over residues 653-677 (NSGRTRSAFSSLQNIPESLRRQSNV). Residues 747 to 761 (SGASQRRLSSSSSAA) are compositionally biased toward low complexity. The segment covering 774-785 (KVSRIEEREQGR) has biased composition (basic and acidic residues). Low complexity-rich tracts occupy residues 796 to 814 (YGPG…TSSS) and 865 to 874 (DGRGPPARGG). A Phosphoserine modification is found at Ser-888. Over residues 895–908 (EAEREASWSEDRPG) the composition is skewed to basic and acidic residues. At Thr-909 the chain carries Phosphothreonine. Phosphoserine is present on residues Ser-912 and Ser-969. An ASD1 domain is found at 927-1023 (IKDAQSRVLG…SEPEKMNEVG (97 aa)). The span at 1004 to 1020 (LTVEQKKRSYSEPEKMN) shows a compositional bias: basic and acidic residues. Phosphoserine is present on residues Ser-1063 and Ser-1066. 4 disordered regions span residues 1083 to 1102 (YIQR…PEAG), 1107 to 1223 (AQSA…AEDL), 1304 to 1425 (ATVA…PPWV), and 1446 to 1654 (ANLK…KTSE). The span at 1114 to 1127 (AGPAAPDGPGLASA) shows a compositional bias: low complexity. Residues 1134–1146 (REPEALPRKEHTH) show a composition bias toward basic and acidic residues. Residues Trp-1175, Val-1179, and Ser-1219 each carry the phosphoserine modification. A compositionally biased stretch (low complexity) spans 1307–1318 (ASSAPPESSGAA). Residues Ser-1350 and Ser-1354 each carry the phosphoserine modification. A compositionally biased stretch (polar residues) spans 1366 to 1399 (YRSQLAMDQQTGQQPPSSPASAVTQPTSPRSPEL). Residues 1455 to 1469 (PSRPSSCSTSDPDTP) show a composition bias toward low complexity. A compositionally biased stretch (pro residues) spans 1513–1524 (LPPPPPPSPPSE). The segment covering 1581–1630 (EGSQIMTATPPQTSAKGSEAESNTPSSASAQPQLNGSPGKQLCPSQTRNL) has biased composition (polar residues). Over residues 1634–1654 (PVERTQDLGKKTHAEPQKTSE) the composition is skewed to basic and acidic residues. One can recognise an ASD2 domain in the interval 1659 to 1947 (EALAKEIVHQ…QVRCLLESLP (289 aa)). A coiled-coil region spans residues 1844-1890 (RLARVENVLRGLGEDASKEERSSLNEKRKVLAGQHEDARELKENLDR).

The protein belongs to the shroom family. As to quaternary structure, interacts with F-actin. Interacts with ROCK1.

Its subcellular location is the cell junction. It localises to the adherens junction. The protein resides in the cytoplasm. It is found in the cytoskeleton. The protein localises to the apical cell membrane. In terms of biological role, controls cell shape changes in the neuroepithelium during neural tube closure. Induces apical constriction in epithelial cells by promoting the apical accumulation of F-actin and myosin II, and probably by bundling stress fibers. Induces apicobasal cell elongation by redistributing gamma-tubulin and directing the assembly of robust apicobasal microtubule arrays. The sequence is that of Protein Shroom3 (Shroom3) from Mus musculus (Mouse).